A 212-amino-acid polypeptide reads, in one-letter code: Pyridoxine/pyridoxamine 5'-phosphate oxidase (212 aa).

Substrate-binding positions include 8–11 (RREY) and lysine 66. Residues 61–66 (RIVLLK), 76–77 (FT), arginine 82, lysine 83, and glutamine 105 each bind FMN. Substrate-binding residues include tyrosine 123, arginine 127, and serine 131. FMN contacts are provided by residues 140–141 (QS) and tryptophan 185. 191–193 (RLH) provides a ligand contact to substrate. An FMN-binding site is contributed by arginine 195.

The protein belongs to the pyridoxamine 5'-phosphate oxidase family. Homodimer. The cofactor is FMN.

The enzyme catalyses pyridoxamine 5'-phosphate + O2 + H2O = pyridoxal 5'-phosphate + H2O2 + NH4(+). It catalyses the reaction pyridoxine 5'-phosphate + O2 = pyridoxal 5'-phosphate + H2O2. It functions in the pathway cofactor metabolism; pyridoxal 5'-phosphate salvage; pyridoxal 5'-phosphate from pyridoxamine 5'-phosphate: step 1/1. The protein operates within cofactor metabolism; pyridoxal 5'-phosphate salvage; pyridoxal 5'-phosphate from pyridoxine 5'-phosphate: step 1/1. Its function is as follows. Catalyzes the oxidation of either pyridoxine 5'-phosphate (PNP) or pyridoxamine 5'-phosphate (PMP) into pyridoxal 5'-phosphate (PLP). The chain is Pyridoxine/pyridoxamine 5'-phosphate oxidase from Shewanella halifaxensis (strain HAW-EB4).